The chain runs to 351 residues: Flagellar P-ring protein (351 aa).

The first 20 residues, 1-20 (MKKILFLFTASLLLHVTLQA), serve as a signal peptide directing secretion.

This sequence belongs to the FlgI family. In terms of assembly, the basal body constitutes a major portion of the flagellar organelle and consists of four rings (L,P,S, and M) mounted on a central rod.

The protein resides in the periplasm. It is found in the bacterial flagellum basal body. Functionally, assembles around the rod to form the L-ring and probably protects the motor/basal body from shearing forces during rotation. This chain is Flagellar P-ring protein, found in Sulfurimonas denitrificans (strain ATCC 33889 / DSM 1251) (Thiomicrospira denitrificans (strain ATCC 33889 / DSM 1251)).